The chain runs to 204 residues: 34 kDa membrane antigen (204 aa).

The N-terminal stretch at 1–19 (MKRVSLLGSAAIFALVFSA) is a signal peptide. C20 carries the N-palmitoyl cysteine lipid modification. C20 carries the S-diacylglycerol cysteine lipid modification.

This sequence belongs to the UPF0423 family.

The protein localises to the cell membrane. Its function is as follows. This antigen is a pathogen-specific membrane immunogen. This is 34 kDa membrane antigen (tpd) from Treponema pallidum (strain Nichols).